The following is a 643-amino-acid chain: Threonine--tRNA ligase (643 aa).

Positions 1–61 (MPIITLPDGS…EQDATLEIIT (61 aa)) constitute a TGS domain. The segment at 243 to 534 (DHRKIGKALD…ITEEYAGFFP (292 aa)) is catalytic. Zn(2+) is bound by residues Cys-334, His-385, and His-511.

This sequence belongs to the class-II aminoacyl-tRNA synthetase family. In terms of assembly, homodimer. Zn(2+) is required as a cofactor.

The protein resides in the cytoplasm. The enzyme catalyses tRNA(Thr) + L-threonine + ATP = L-threonyl-tRNA(Thr) + AMP + diphosphate + H(+). In terms of biological role, catalyzes the attachment of threonine to tRNA(Thr) in a two-step reaction: L-threonine is first activated by ATP to form Thr-AMP and then transferred to the acceptor end of tRNA(Thr). Also edits incorrectly charged L-seryl-tRNA(Thr). This Haemophilus influenzae (strain 86-028NP) protein is Threonine--tRNA ligase.